The chain runs to 179 residues: Pyridoxal 5'-phosphate synthase subunit PdxT (179 aa).

48-50 (GES) is a binding site for L-glutamine. C79 (nucleophile) is an active-site residue. Residues R101 and 127-128 (IR) contribute to the L-glutamine site. Residues H163 and E165 each act as charge relay system in the active site.

Belongs to the glutaminase PdxT/SNO family. As to quaternary structure, in the presence of PdxS, forms a dodecamer of heterodimers. Only shows activity in the heterodimer.

It catalyses the reaction aldehydo-D-ribose 5-phosphate + D-glyceraldehyde 3-phosphate + L-glutamine = pyridoxal 5'-phosphate + L-glutamate + phosphate + 3 H2O + H(+). The enzyme catalyses L-glutamine + H2O = L-glutamate + NH4(+). It participates in cofactor biosynthesis; pyridoxal 5'-phosphate biosynthesis. In terms of biological role, catalyzes the hydrolysis of glutamine to glutamate and ammonia as part of the biosynthesis of pyridoxal 5'-phosphate. The resulting ammonia molecule is channeled to the active site of PdxS. The polypeptide is Pyridoxal 5'-phosphate synthase subunit PdxT (Francisella tularensis subsp. tularensis (strain FSC 198)).